A 328-amino-acid polypeptide reads, in one-letter code: N-acetyl-gamma-glutamyl-phosphate reductase (328 aa).

Cysteine 143 is a catalytic residue.

It belongs to the NAGSA dehydrogenase family. Type 1 subfamily.

Its subcellular location is the cytoplasm. The enzyme catalyses N-acetyl-L-glutamate 5-semialdehyde + phosphate + NADP(+) = N-acetyl-L-glutamyl 5-phosphate + NADPH + H(+). It participates in amino-acid biosynthesis; L-arginine biosynthesis; N(2)-acetyl-L-ornithine from L-glutamate: step 3/4. Functionally, catalyzes the NADPH-dependent reduction of N-acetyl-5-glutamyl phosphate to yield N-acetyl-L-glutamate 5-semialdehyde. This Methanosphaerula palustris (strain ATCC BAA-1556 / DSM 19958 / E1-9c) protein is N-acetyl-gamma-glutamyl-phosphate reductase.